We begin with the raw amino-acid sequence, 424 residues long: Type II methyltransferase M.BspRI (424 aa).

The SAM-dependent MTase C5-type domain occupies 58-408 (FNVLSLFCGA…KSIAQFAADY (351 aa)). The active-site S-methylcysteine intermediate is cysteine 156. An S-methylcysteine; by autocatalysis modification is found at cysteine 181.

This sequence belongs to the class I-like SAM-binding methyltransferase superfamily. C5-methyltransferase family. In terms of assembly, monomer. In the absence of DNA, can self-methylate two cysteine residues.

The enzyme catalyses a 2'-deoxycytidine in DNA + S-adenosyl-L-methionine = a 5-methyl-2'-deoxycytidine in DNA + S-adenosyl-L-homocysteine + H(+). Functionally, a methylase, recognizes the double-stranded sequence 5'-GGCC-3', methylates C-3 on both strands, and protects the DNA from cleavage by the BspRI endonuclease. The sequence is that of Type II methyltransferase M.BspRI (bspRIM) from Lysinibacillus sphaericus (Bacillus sphaericus).